The chain runs to 491 residues: Trypanothione reductase (491 aa).

35–52 provides a ligand contact to FAD; that stretch reads DVQATHGPPALVALGGTC. Cys-52 and Cys-57 are disulfide-bonded. His-461 (proton acceptor) is an active-site residue.

Belongs to the class-I pyridine nucleotide-disulfide oxidoreductase family. Homodimer. FAD serves as cofactor.

Its subcellular location is the cytoplasm. It catalyses the reaction trypanothione + NADP(+) = trypanothione disulfide + NADPH + H(+). In terms of biological role, trypanothione is the parasite analog of glutathione; this enzyme is the equivalent of glutathione reductase. This Leishmania donovani protein is Trypanothione reductase (TPR).